We begin with the raw amino-acid sequence, 406 residues long: Phosphopentomutase (406 aa).

Positions 10, 305, 310, 346, 347, and 358 each coordinate Mn(2+).

It belongs to the phosphopentomutase family. The cofactor is Mn(2+).

The protein localises to the cytoplasm. The catalysed reaction is 2-deoxy-alpha-D-ribose 1-phosphate = 2-deoxy-D-ribose 5-phosphate. It carries out the reaction alpha-D-ribose 1-phosphate = D-ribose 5-phosphate. It participates in carbohydrate degradation; 2-deoxy-D-ribose 1-phosphate degradation; D-glyceraldehyde 3-phosphate and acetaldehyde from 2-deoxy-alpha-D-ribose 1-phosphate: step 1/2. Functionally, isomerase that catalyzes the conversion of deoxy-ribose 1-phosphate (dRib-1-P) and ribose 1-phosphate (Rib-1-P) to deoxy-ribose 5-phosphate (dRib-5-P) and ribose 5-phosphate (Rib-5-P), respectively. The protein is Phosphopentomutase of Aliivibrio salmonicida (strain LFI1238) (Vibrio salmonicida (strain LFI1238)).